A 415-amino-acid polypeptide reads, in one-letter code: Glutamyl-tRNA reductase (415 aa).

Residues 49–52 (TCNR), serine 104, 109–111 (EPQ), and glutamine 115 each bind substrate. The active-site Nucleophile is the cysteine 50. 184–189 (GAGEMI) contacts NADP(+).

It belongs to the glutamyl-tRNA reductase family. In terms of assembly, homodimer.

It catalyses the reaction (S)-4-amino-5-oxopentanoate + tRNA(Glu) + NADP(+) = L-glutamyl-tRNA(Glu) + NADPH + H(+). It participates in porphyrin-containing compound metabolism; protoporphyrin-IX biosynthesis; 5-aminolevulinate from L-glutamyl-tRNA(Glu): step 1/2. Its function is as follows. Catalyzes the NADPH-dependent reduction of glutamyl-tRNA(Glu) to glutamate 1-semialdehyde (GSA). This chain is Glutamyl-tRNA reductase, found in Neisseria meningitidis serogroup C (strain 053442).